Here is a 344-residue protein sequence, read N- to C-terminus: Phosphoribosylformylglycinamidine cyclo-ligase (344 aa).

The protein belongs to the AIR synthase family.

It localises to the cytoplasm. It catalyses the reaction 2-formamido-N(1)-(5-O-phospho-beta-D-ribosyl)acetamidine + ATP = 5-amino-1-(5-phospho-beta-D-ribosyl)imidazole + ADP + phosphate + H(+). Its pathway is purine metabolism; IMP biosynthesis via de novo pathway; 5-amino-1-(5-phospho-D-ribosyl)imidazole from N(2)-formyl-N(1)-(5-phospho-D-ribosyl)glycinamide: step 2/2. In Leptospira interrogans serogroup Icterohaemorrhagiae serovar Lai (strain 56601), this protein is Phosphoribosylformylglycinamidine cyclo-ligase.